Consider the following 179-residue polypeptide: Large ribosomal subunit protein bL9 (179 aa).

Residues proline 156–glutamate 179 form a disordered region. Residues glutamate 157 to glutamate 166 are compositionally biased toward low complexity. Over residues proline 167 to glutamate 179 the composition is skewed to acidic residues.

It belongs to the bacterial ribosomal protein bL9 family.

Functionally, binds to the 23S rRNA. This is Large ribosomal subunit protein bL9 from Porphyromonas gingivalis (strain ATCC 33277 / DSM 20709 / CIP 103683 / JCM 12257 / NCTC 11834 / 2561).